A 436-amino-acid chain; its full sequence is 3-ketoacyl-CoA thiolase (436 aa).

Cys99 (acyl-thioester intermediate) is an active-site residue. Residues His392 and Cys422 each act as proton acceptor in the active site.

Belongs to the thiolase-like superfamily. Thiolase family. Heterotetramer of two alpha chains (FadJ) and two beta chains (FadI).

Its subcellular location is the cytoplasm. The catalysed reaction is an acyl-CoA + acetyl-CoA = a 3-oxoacyl-CoA + CoA. It participates in lipid metabolism; fatty acid beta-oxidation. Catalyzes the final step of fatty acid oxidation in which acetyl-CoA is released and the CoA ester of a fatty acid two carbons shorter is formed. This Shewanella oneidensis (strain ATCC 700550 / JCM 31522 / CIP 106686 / LMG 19005 / NCIMB 14063 / MR-1) protein is 3-ketoacyl-CoA thiolase.